The primary structure comprises 241 residues: Probable transcriptional regulatory protein FMG_0893 (241 aa).

It belongs to the TACO1 family.

It localises to the cytoplasm. The protein is Probable transcriptional regulatory protein FMG_0893 of Finegoldia magna (strain ATCC 29328 / DSM 20472 / WAL 2508) (Peptostreptococcus magnus).